The chain runs to 497 residues: UDP-N-acetylmuramoyl-L-alanyl-D-glutamate--2,6-diaminopimelate ligase (497 aa).

Residue S29 coordinates UDP-N-acetyl-alpha-D-muramoyl-L-alanyl-D-glutamate. G116–T122 contacts ATP. UDP-N-acetyl-alpha-D-muramoyl-L-alanyl-D-glutamate is bound by residues N157, T158 to T159, S185, Q191, and R193. The residue at position 225 (K225) is an N6-carboxylysine. Residues R392, D416 to R419, G467, and E471 contribute to the meso-2,6-diaminopimelate site. Positions D416–R419 match the Meso-diaminopimelate recognition motif motif.

This sequence belongs to the MurCDEF family. MurE subfamily. Mg(2+) is required as a cofactor. In terms of processing, carboxylation is probably crucial for Mg(2+) binding and, consequently, for the gamma-phosphate positioning of ATP.

The protein localises to the cytoplasm. The catalysed reaction is UDP-N-acetyl-alpha-D-muramoyl-L-alanyl-D-glutamate + meso-2,6-diaminopimelate + ATP = UDP-N-acetyl-alpha-D-muramoyl-L-alanyl-gamma-D-glutamyl-meso-2,6-diaminopimelate + ADP + phosphate + H(+). Its pathway is cell wall biogenesis; peptidoglycan biosynthesis. Functionally, catalyzes the addition of meso-diaminopimelic acid to the nucleotide precursor UDP-N-acetylmuramoyl-L-alanyl-D-glutamate (UMAG) in the biosynthesis of bacterial cell-wall peptidoglycan. The protein is UDP-N-acetylmuramoyl-L-alanyl-D-glutamate--2,6-diaminopimelate ligase of Buchnera aphidicola subsp. Acyrthosiphon pisum (strain APS) (Acyrthosiphon pisum symbiotic bacterium).